The sequence spans 427 residues: 3-phosphoshikimate 1-carboxyvinyltransferase (427 aa).

Positions 21, 22, and 26 each coordinate 3-phosphoshikimate. Position 21 (lysine 21) interacts with phosphoenolpyruvate. 2 residues coordinate phosphoenolpyruvate: glycine 93 and arginine 121. 3-phosphoshikimate-binding residues include serine 166, glutamine 168, aspartate 314, and lysine 341. Glutamine 168 serves as a coordination point for phosphoenolpyruvate. Catalysis depends on aspartate 314, which acts as the Proton acceptor. Phosphoenolpyruvate contacts are provided by arginine 345 and arginine 387.

It belongs to the EPSP synthase family. Monomer.

Its subcellular location is the cytoplasm. The catalysed reaction is 3-phosphoshikimate + phosphoenolpyruvate = 5-O-(1-carboxyvinyl)-3-phosphoshikimate + phosphate. It functions in the pathway metabolic intermediate biosynthesis; chorismate biosynthesis; chorismate from D-erythrose 4-phosphate and phosphoenolpyruvate: step 6/7. Catalyzes the transfer of the enolpyruvyl moiety of phosphoenolpyruvate (PEP) to the 5-hydroxyl of shikimate-3-phosphate (S3P) to produce enolpyruvyl shikimate-3-phosphate and inorganic phosphate. The sequence is that of 3-phosphoshikimate 1-carboxyvinyltransferase from Alkaliphilus oremlandii (strain OhILAs) (Clostridium oremlandii (strain OhILAs)).